Reading from the N-terminus, the 188-residue chain is UPF0488 protein C8orf33 homolog (188 aa).

Disordered regions lie at residues 1–65 (MAAP…AEAQ), 87–112 (QRPT…TPLP), and 144–182 (AHSA…RDEE). Residue Ala-2 is modified to N-acetylalanine. Ser-41 is modified (phosphoserine). A compositionally biased stretch (basic and acidic residues) spans 166-182 (PRPEGRSKGTSDTRDEE).

This sequence belongs to the UPF0488 family.

This chain is UPF0488 protein C8orf33 homolog, found in Bos taurus (Bovine).